Reading from the N-terminus, the 1376-residue chain is YLP motif-containing protein 1 (1376 aa).

2 disordered regions span residues 1–335 (MYPN…PEED) and 511–1058 (STIP…PPGR). A compositionally biased stretch (pro residues) spans 14-27 (YPPPPVPPPPPPVA). Low complexity-rich tracts occupy residues 31-50 (ASPG…SSSG) and 59-80 (LAQL…LQPH). Pro residues-rich tracts occupy residues 81–93 (HLPP…PPVM), 102–114 (QPPP…PPGP), 148–158 (PESPPVPPGSY), 166–176 (MPPPQPPPSYY), and 184–204 (YLPP…PPSI). Composition is skewed to polar residues over residues 207–216 (GNKTTIQQEP) and 238–260 (STMT…LQQR). Residues 261–271 (TKVHLPGHKKG) are compositionally biased toward basic residues. Basic and acidic residues predominate over residues 277 to 286 (DVPEPIKEEA). Pro residues-rich tracts occupy residues 303 to 320 (PPLP…PPEE), 511 to 537 (STIP…PGMP), 545 to 594 (LPPP…PQGM), and 632 to 641 (PPSPYHPPPQ). Over residues 642 to 671 (SEQGNSKPLNKVFSSEQGLGESSSALSQSV) the composition is skewed to polar residues. K675 is modified (N6-methyllysine). Basic and acidic residues predominate over residues 698–714 (RGPREQKEQLQKLKDFG). Composition is skewed to pro residues over residues 738 to 753 (MYPP…PMGK), 773 to 796 (TRPP…PPVI), and 840 to 870 (PVLP…PPPV). Residue K886 forms a Glycyl lysine isopeptide (Lys-Gly) (interchain with G-Cter in SUMO2) linkage. Composition is skewed to basic and acidic residues over residues 896–930 (ITLR…EPYF), 937–1004 (TDHR…DRPP), 1013–1023 (GERRTYPEERM), and 1039–1058 (RVEK…PPGR). K943 is covalently cross-linked (Glycyl lysine isopeptide (Lys-Gly) (interchain with G-Cter in SUMO2)). The tract at residues 1326 to 1333 (KKRVRWAD) is involved in interaction with PPP1CA.

As to quaternary structure, interacts with PPP1CA and NCOA5. Forms a complex with ILF2, ILF3, KHDRBS1, RBMX, NCOA5 and PPP1CA. As to expression, high level expression seen in the brain, adipose tissue, heart and kidney, with a low level expression in muscle, spleen and lung (at protein level).

It is found in the nucleus. It localises to the nucleus speckle. In terms of biological role, plays a role in the reduction of telomerase activity during differentiation of embryonic stem cells by binding to the core promoter of TERT and controlling its down-regulation. The protein is YLP motif-containing protein 1 (Ylpm1) of Rattus norvegicus (Rat).